Reading from the N-terminus, the 280-residue chain is Adenosylcobinamide-GDP ribazoletransferase (280 aa).

6 helical membrane-spanning segments follow: residues 4-24, 39-59, 61-81, 108-128, 196-216, and 255-275; these read YLLA…GISM, VVGA…QVIF, GPVL…FNHL, TIGT…YGSI, FLIG…WIGL, and TALI…MGGF.

Belongs to the CobS family. Mg(2+) is required as a cofactor.

It is found in the cell membrane. The enzyme catalyses alpha-ribazole + adenosylcob(III)inamide-GDP = adenosylcob(III)alamin + GMP + H(+). The catalysed reaction is alpha-ribazole 5'-phosphate + adenosylcob(III)inamide-GDP = adenosylcob(III)alamin 5'-phosphate + GMP + H(+). It participates in cofactor biosynthesis; adenosylcobalamin biosynthesis; adenosylcobalamin from cob(II)yrinate a,c-diamide: step 7/7. Joins adenosylcobinamide-GDP and alpha-ribazole to generate adenosylcobalamin (Ado-cobalamin). Also synthesizes adenosylcobalamin 5'-phosphate from adenosylcobinamide-GDP and alpha-ribazole 5'-phosphate. The protein is Adenosylcobinamide-GDP ribazoletransferase of Methanosarcina barkeri (strain Fusaro / DSM 804).